A 331-amino-acid polypeptide reads, in one-letter code: Ketol-acid reductoisomerase (NADP(+)) (331 aa).

One can recognise a KARI N-terminal Rossmann domain in the interval 2-182 (AQLFYDSDAD…GGTRAGILET (181 aa)). NADP(+) contacts are provided by residues 25 to 28 (YGSQ), Ser-51, Ser-53, and 83 to 86 (DEFQ). His-108 is a catalytic residue. Position 134 (Gly-134) interacts with NADP(+). A KARI C-terminal knotted domain is found at 183–328 (NFKEETETDL…KGLRSMFSWL (146 aa)). The Mg(2+) site is built by Asp-191, Glu-195, Glu-227, and Glu-231. Ser-252 serves as a coordination point for substrate.

It belongs to the ketol-acid reductoisomerase family. It depends on Mg(2+) as a cofactor.

It catalyses the reaction (2R)-2,3-dihydroxy-3-methylbutanoate + NADP(+) = (2S)-2-acetolactate + NADPH + H(+). The catalysed reaction is (2R,3R)-2,3-dihydroxy-3-methylpentanoate + NADP(+) = (S)-2-ethyl-2-hydroxy-3-oxobutanoate + NADPH + H(+). It participates in amino-acid biosynthesis; L-isoleucine biosynthesis; L-isoleucine from 2-oxobutanoate: step 2/4. It functions in the pathway amino-acid biosynthesis; L-valine biosynthesis; L-valine from pyruvate: step 2/4. Its function is as follows. Involved in the biosynthesis of branched-chain amino acids (BCAA). Catalyzes an alkyl-migration followed by a ketol-acid reduction of (S)-2-acetolactate (S2AL) to yield (R)-2,3-dihydroxy-isovalerate. In the isomerase reaction, S2AL is rearranged via a Mg-dependent methyl migration to produce 3-hydroxy-3-methyl-2-ketobutyrate (HMKB). In the reductase reaction, this 2-ketoacid undergoes a metal-dependent reduction by NADPH to yield (R)-2,3-dihydroxy-isovalerate. The sequence is that of Ketol-acid reductoisomerase (NADP(+)) from Synechococcus sp. (strain CC9605).